Here is a 263-residue protein sequence, read N- to C-terminus: L-aspartate dehydrogenase (263 aa).

NAD(+) contacts are provided by alanine 120 and asparagine 186. Residue histidine 216 is part of the active site.

Belongs to the L-aspartate dehydrogenase family.

The catalysed reaction is L-aspartate + NADP(+) + H2O = oxaloacetate + NH4(+) + NADPH + H(+). It carries out the reaction L-aspartate + NAD(+) + H2O = oxaloacetate + NH4(+) + NADH + H(+). It functions in the pathway cofactor biosynthesis; NAD(+) biosynthesis; iminoaspartate from L-aspartate (dehydrogenase route): step 1/1. In terms of biological role, specifically catalyzes the NAD or NADP-dependent dehydrogenation of L-aspartate to iminoaspartate. This Acinetobacter baumannii (strain AB307-0294) protein is L-aspartate dehydrogenase.